A 521-amino-acid chain; its full sequence is Probable methylmalonate-semialdehyde/malonate-semialdehyde dehydrogenase [acylating], mitochondrial (521 aa).

NAD(+)-binding residues include Ala170, Phe172, Lys196, Glu199, Arg200, and Ser249. Cys304 acts as the Nucleophile in catalysis. Residue Glu404 coordinates NAD(+).

The protein belongs to the aldehyde dehydrogenase family. In terms of assembly, homotetramer.

The protein resides in the mitochondrion. It catalyses the reaction 2-methyl-3-oxopropanoate + NAD(+) + CoA + H2O = propanoyl-CoA + hydrogencarbonate + NADH + H(+). It carries out the reaction 3-oxopropanoate + NAD(+) + CoA + H2O = hydrogencarbonate + acetyl-CoA + NADH + H(+). Functionally, probable malonate and methylmalonate semialdehyde dehydrogenase involved in the catabolism of valine, thymine, and compounds catabolized by way of beta-alanine, including uracil and cytidine. The polypeptide is Probable methylmalonate-semialdehyde/malonate-semialdehyde dehydrogenase [acylating], mitochondrial (Anopheles gambiae (African malaria mosquito)).